The sequence spans 553 residues: Putative transport protein YidE (553 aa).

5 helical membrane-spanning segments follow: residues 4-24 (IALTVSILALVAVVGLFIGNV), 28-48 (GVGLGIGGVLFGGIIVGHFVS), 65-85 (FGLILFVYTIGIQVGPGFFAS), 95-115 (LFAVLIVIIGGLVTAILHKLF), and 158-178 (MSYAMAYPFGICGILFTMWML). RCK C-terminal domains lie at 191–276 (QQHE…VIGQ) and 279–361 (DTSL…VLGN). A run of 6 helical transmembrane segments spans residues 371 to 391 (MLPVFIGIGLGVLLGSIPVFV), 393 to 413 (GFPAALKLGLAGGPLIMALIL), 439 to 459 (IVLFLSVVGLKSGGDFIHTLV), 464 to 484 (LSWIGYGALITAVPLITVGIL), 493 to 513 (YLTMCGMLAGSMTDPPALAFA), and 533 to 553 (LVMFLRIITPQLLAVLFWSIG).

The protein belongs to the AAE transporter (TC 2.A.81) family. YidE subfamily.

The protein localises to the cell membrane. In Escherichia coli O127:H6 (strain E2348/69 / EPEC), this protein is Putative transport protein YidE.